Here is a 458-residue protein sequence, read N- to C-terminus: 3-isopropylmalate dehydratase large subunit (458 aa).

Positions 337, 397, and 400 each coordinate [4Fe-4S] cluster.

This sequence belongs to the aconitase/IPM isomerase family. LeuC type 1 subfamily. Heterodimer of LeuC and LeuD. The cofactor is [4Fe-4S] cluster.

It catalyses the reaction (2R,3S)-3-isopropylmalate = (2S)-2-isopropylmalate. It functions in the pathway amino-acid biosynthesis; L-leucine biosynthesis; L-leucine from 3-methyl-2-oxobutanoate: step 2/4. In terms of biological role, catalyzes the isomerization between 2-isopropylmalate and 3-isopropylmalate, via the formation of 2-isopropylmaleate. The protein is 3-isopropylmalate dehydratase large subunit of Leuconostoc mesenteroides subsp. mesenteroides (strain ATCC 8293 / DSM 20343 / BCRC 11652 / CCM 1803 / JCM 6124 / NCDO 523 / NBRC 100496 / NCIMB 8023 / NCTC 12954 / NRRL B-1118 / 37Y).